A 326-amino-acid polypeptide reads, in one-letter code: UDP-3-O-acylglucosamine N-acyltransferase (326 aa).

Residue H235 is the Proton acceptor of the active site.

This sequence belongs to the transferase hexapeptide repeat family. LpxD subfamily. As to quaternary structure, homotrimer.

It catalyses the reaction a UDP-3-O-[(3R)-3-hydroxyacyl]-alpha-D-glucosamine + a (3R)-hydroxyacyl-[ACP] = a UDP-2-N,3-O-bis[(3R)-3-hydroxyacyl]-alpha-D-glucosamine + holo-[ACP] + H(+). The protein operates within bacterial outer membrane biogenesis; LPS lipid A biosynthesis. Its function is as follows. Catalyzes the N-acylation of UDP-3-O-acylglucosamine using 3-hydroxyacyl-ACP as the acyl donor. Is involved in the biosynthesis of lipid A, a phosphorylated glycolipid that anchors the lipopolysaccharide to the outer membrane of the cell. The sequence is that of UDP-3-O-acylglucosamine N-acyltransferase from Helicobacter hepaticus (strain ATCC 51449 / 3B1).